Here is a 312-residue protein sequence, read N- to C-terminus: MKKLLVKELIEQFQDCVNLIDGHTNTSNVIRVPGLKRVVFEMLGLFSSQIGSVAILGKREFGFLSQKTLVEQQQILHNLLKLNPPAIILTKSFTDPTVLLQVNQTYQVPILKTDFFSTELSFTVETYINEQFATVAQIHGVLLEVFGVGVLLTGRSGIGKSECALDLINKNHLFVGDDAIEIYRLGNRLFGRAQEVAKKFMEIRGLGIINVERFYGLQITKQRTEIQLMVNLLSLEKQTTVTFERLGTELKKQRLLGVDLSFYEIPISPGRKTSEIIESAVIDFKLKHSGYNSALDFIENQKAILKRKKDES.

Active-site residues include His-139 and Lys-160. 154-161 is an ATP binding site; it reads GRSGIGKS. Residue Ser-161 coordinates Mg(2+). Asp-178 (proton acceptor; for phosphorylation activity. Proton donor; for dephosphorylation activity) is an active-site residue. An important for the catalytic mechanism of both phosphorylation and dephosphorylation region spans residues 201 to 210; that stretch reads MEIRGLGIIN. Glu-202 contacts Mg(2+). The active site involves Arg-245. The tract at residues 266–271 is important for the catalytic mechanism of dephosphorylation; that stretch reads PISPGR.

The protein belongs to the HPrK/P family. In terms of assembly, homohexamer, arranged as bilayered trimers. Mg(2+) serves as cofactor.

It carries out the reaction [HPr protein]-L-serine + ATP = [HPr protein]-O-phospho-L-serine + ADP + H(+). The enzyme catalyses [HPr protein]-O-phospho-L-serine + phosphate + H(+) = [HPr protein]-L-serine + diphosphate. With respect to regulation, contrary to HPrK/P of B.subtilis and other bacteria, that of M.pneumoniae is active as a kinase at very low ATP concentrations in the absence of fructose 1,6-bisphosphate (FBP). Kinase activity is slightly activated by FBP, and inhibited by inorganic phosphate (Pi), but FBP prevents kinase inhibition by Pi. Dephosphorylation of P-Ser-HPr by M.pneumoniae HPrK/P is strictly dependent on the presence of Pi, and is inhibited by FBP. This unique mode of control of HPrK/P activity is proposed to reflect the parasitic lifestyle of M.pneumoniae, that is strictly adapted to its ecological niche on nutrient-rich human mucous membranes. Its function is as follows. Is a metabolite-sensitive enzyme that catalyzes the ATP-as well as probably the pyrophosphate-dependent phosphorylation of Ser-47 in HPr, a phosphocarrier protein of the phosphoenolpyruvate-dependent sugar phosphotransferase system (PTS). HprK/P also catalyzes the pyrophosphate-producing, inorganic phosphate-dependent dephosphorylation (phosphorolysis) of seryl-phosphorylated HPr (P-Ser-HPr). The regulatory role of HPrK/P in the physiology of M.pneumoniae is not known yet. The sequence is that of HPr kinase/phosphorylase (hprK) from Mycoplasma pneumoniae (strain ATCC 29342 / M129 / Subtype 1) (Mycoplasmoides pneumoniae).